Here is a 110-residue protein sequence, read N- to C-terminus: FMRFamide-like neuropeptides 11 (110 aa).

The N-terminal stretch at 1 to 22 is a signal peptide; it reads MTQFSALALLLIVFVAASFAQS. A propeptide spanning residues 23–29 is cleaved from the precursor; sequence YDDVSAE. Phenylalanine amide is present on residues phenylalanine 40 and phenylalanine 54. A disordered region spans residues 60 to 85; it reads LDEEDFAPESPLQGKRNGAPQPFVRF. Glutamine 72 carries the post-translational modification Glutamine amide. At phenylalanine 85 the chain carries Phenylalanine amide. A propeptide spanning residues 88–110 is cleaved from the precursor; that stretch reads SGQLDHMHDLLSTLQKLKFANNK.

Belongs to the FARP (FMRFamide related peptide) family. As to expression, each flp gene is expressed in a distinct set of neurons. Flp-11 is expressed in the DD, VD and DVB motor neurons, the PVC and URX interneurons, and the AUA, BAG, DA, LUA, and SAB neurons. Also expressed in head muscle, socket or sheath cells and uterine cells. Expressed exclusively in PHC sensory neurons in males. Expressed in AVK and RIS interneurons.

Its subcellular location is the secreted. Functionally, FMRFamides and FMRFamide-like peptides are neuropeptides. Induces sleep-like quiescence behavior following release from RIS interneuron. Helps to sustain locomotion stop after gamma-aminobutyric acid (GABA) induces fast slowing response. Inhibits the late-stage body bend swimming frequency in animals through several receptors including frpr-3, npr-4 and npr-22. In terms of biological role, potent inhibitor of the activity of the dissected pharyngeal myogenic muscle system. Acts as a ligand for the npr-22 receptor in vitro. Its function is as follows. Acts as a ligand for the npr-22 receptor in vitro. This chain is FMRFamide-like neuropeptides 11, found in Caenorhabditis elegans.